Here is a 154-residue protein sequence, read N- to C-terminus: Iron-sulfur cluster assembly 2 homolog, mitochondrial (154 aa).

The N-terminal 8 residues, 1–8, are a transit peptide targeting the mitochondrion; sequence MAASRALS. Positions 79, 144, and 146 each coordinate Fe cation.

The protein belongs to the HesB/IscA family. In terms of assembly, heterotetramer; forms a dimer of dimers with IBA57. Interacts with [2Fe-2S]-ISCA2 forming the heterodimer [2Fe- 2S]-ISCA2-IBA57 complex; [2Fe-2S] cluster binding is absolutely required to promote the complex formation.

It is found in the mitochondrion. Functionally, involved in the maturation of mitochondrial 4Fe-4S proteins functioning late in the iron-sulfur cluster assembly pathway. May be involved in the binding of an intermediate of Fe/S cluster assembly. In Mus musculus (Mouse), this protein is Iron-sulfur cluster assembly 2 homolog, mitochondrial (Isca2).